Consider the following 123-residue polypeptide: Alpha-lactalbumin (123 aa).

One can recognise a C-type lysozyme domain in the interval 1-123; that stretch reads KQFTKCELSQ…KLEQWLCEEL (123 aa). 4 disulfide bridges follow: C6-C120, C28-C111, C61-C77, and C73-C91. Positions 79, 82, 84, 87, and 88 each coordinate Ca(2+).

It belongs to the glycosyl hydrolase 22 family. In terms of assembly, lactose synthase (LS) is a heterodimer of a catalytic component, beta1,4-galactosyltransferase (beta4Gal-T1) and a regulatory component, alpha-lactalbumin (LA). As to expression, mammary gland specific. Secreted in milk.

Its subcellular location is the secreted. Functionally, regulatory subunit of lactose synthase, changes the substrate specificity of galactosyltransferase in the mammary gland making glucose a good acceptor substrate for this enzyme. This enables LS to synthesize lactose, the major carbohydrate component of milk. In other tissues, galactosyltransferase transfers galactose onto the N-acetylglucosamine of the oligosaccharide chains in glycoproteins. This is Alpha-lactalbumin (LALBA) from Equus asinus (Donkey).